The primary structure comprises 784 residues: LPS-assembly protein LptD (784 aa).

An N-terminal signal peptide occupies residues 1-24 (MKKRIPTLLATMIASALYSHQGLA). 2 cysteine pairs are disulfide-bonded: cysteine 31/cysteine 724 and cysteine 173/cysteine 725.

The protein belongs to the LptD family. As to quaternary structure, component of the lipopolysaccharide transport and assembly complex. Interacts with LptE and LptA. Contains two intramolecular disulfide bonds.

It localises to the cell outer membrane. Functionally, together with LptE, is involved in the assembly of lipopolysaccharide (LPS) at the surface of the outer membrane. The protein is LPS-assembly protein LptD of Salmonella paratyphi A (strain ATCC 9150 / SARB42).